A 38-amino-acid chain; its full sequence is Photosystem I reaction center subunit IX (38 aa).

Residues 4-24 (FLTTAPVVAAIWFTATAGILI) form a helical membrane-spanning segment.

Belongs to the PsaJ family.

Its subcellular location is the cellular thylakoid membrane. Functionally, may help in the organization of the PsaE and PsaF subunits. This Synechococcus sp. (strain CC9902) protein is Photosystem I reaction center subunit IX.